Consider the following 389-residue polypeptide: MDTAGFVSRLLRNPAEAEVDRFLQTRSGKQMVQLFRLIPEPAAQAALTARLLLLAPQVMSGRHRFVAPEKAKKALNAFVGFRCYYISIPHFKSWPMKKLSNLIGLLWETDPNKSLWSLMTKAWSAIRDQIGKDRAPLDQFFSLICPHLNMPAPESYLAVLGWSVSINEEGDPTISHDGSSRSACVGAGLSDTALSVQDIIAYVQSMGYASTYVADVNTTSPTFLGHSVTSTAEKSNLAGAATPAVAPATDRRITARNKRRAKRELAKVTGLRANLEQDILNAHRVDPGRAGEYMPDHYPTPAAVNYDPIPFYDQLVGYFDSPIPNFQDDAAMSSGATLIDATPVSDDTLHGEMDDIVSNAAFFQSDFDAFRSGANEDATLPTFDDVFNA.

A DNA-binding region (alpha box) is located at residues 70–127; it reads KAKKALNAFVGFRCYYISIPHFKSWPMKKLSNLIGLLWETDPNKSLWSLMTKAWSAIR.

It belongs to the MATALPHA1 family.

The protein localises to the nucleus. In terms of biological role, mating type proteins are sequence specific DNA-binding proteins that act as master switches in fungal differentiation by controlling gene expression in a cell type-specific fashion. Transcriptional activator that induces the transcription of alpha-specific genes. This is Mating-type protein MAT-1 (MAT1) from Alternaria alternata (Alternaria rot fungus).